The chain runs to 374 residues: 2-oxoglutarate-Fe(II) type oxidoreductase ppzC (374 aa).

The interval K111–E131 is disordered. The Fe2OG dioxygenase domain occupies Y220–F330. Fe cation contacts are provided by H254, D256, and H311. A 2-oxoglutarate-binding site is contributed by R321.

Belongs to the iron/ascorbate-dependent oxidoreductase family. The cofactor is Fe(2+).

It carries out the reaction peramine + 2-oxoglutarate + O2 = 8-hydroxyperamine + succinate + CO2. It participates in secondary metabolite biosynthesis. 2-oxoglutarate-Fe(II) type oxidoreductase; part of the gene cluster that mediates the biosynthesis of pyrrolopyrazines, secondary metabolites showing insecticidal activity. Within the pathway, ppzC uses peramine as substrate for hydroxylation to yield the novel analog 8-hydroxyperamine. The single multifunctional NRPS ppzA is sufficient to produce peramine via condensation of 1-pyrroline-5-carboxylate and arginine, N-methylation of the alpha-amino group of arginine and reduction of the thioester and the cyclization to form an iminium ion resulting in release from the peptide synthetase. Deprotonation of this intermediate and oxidation of the pyrroline ring would give rise to peramine. In Epichloe species that produce only peramine, the peramine synthetase gene is not localized in a gene cluster, in contrast to Metarhizium species that contain additional pyrrolopyrazine biosynthesis genes. The 2-oxoglutarate-Fe(II) type oxidoreductase ppzC hydroxylates peramine to yield the newly identified compound 8-hydroxyperamine whereas ppzD converts L-proline into trans-4-hydroxy-L-proline, a precursor of peramine biosynthesis. The polypeptide is 2-oxoglutarate-Fe(II) type oxidoreductase ppzC (ppzC) (Metarhizium majus (strain ARSEF 297)).